The following is a 380-amino-acid chain: DNA replication and repair protein RecF (380 aa).

Residue 30–37 (GNNAQGKS) participates in ATP binding.

This sequence belongs to the RecF family.

The protein resides in the cytoplasm. Its function is as follows. The RecF protein is involved in DNA metabolism; it is required for DNA replication and normal SOS inducibility. RecF binds preferentially to single-stranded, linear DNA. It also seems to bind ATP. In Rippkaea orientalis (strain PCC 8801 / RF-1) (Cyanothece sp. (strain PCC 8801)), this protein is DNA replication and repair protein RecF.